The chain runs to 458 residues: tRNA modification GTPase MnmE (458 aa).

Residues arginine 22, glutamate 85, and arginine 124 each coordinate (6S)-5-formyl-5,6,7,8-tetrahydrofolate. Residues 220 to 379 (GIKTVIVGRP…LEEHISELVF (160 aa)) form the TrmE-type G domain. Asparagine 230 provides a ligand contact to K(+). GTP is bound by residues 230–235 (NVGKSS), 249–255 (TEIPGTT), and 274–277 (DTAG). Serine 234 provides a ligand contact to Mg(2+). The K(+) site is built by threonine 249, isoleucine 251, and threonine 254. Threonine 255 contributes to the Mg(2+) binding site. Position 458 (lysine 458) interacts with (6S)-5-formyl-5,6,7,8-tetrahydrofolate.

It belongs to the TRAFAC class TrmE-Era-EngA-EngB-Septin-like GTPase superfamily. TrmE GTPase family. As to quaternary structure, homodimer. Heterotetramer of two MnmE and two MnmG subunits. K(+) is required as a cofactor.

The protein localises to the cytoplasm. In terms of biological role, exhibits a very high intrinsic GTPase hydrolysis rate. Involved in the addition of a carboxymethylaminomethyl (cmnm) group at the wobble position (U34) of certain tRNAs, forming tRNA-cmnm(5)s(2)U34. This Natranaerobius thermophilus (strain ATCC BAA-1301 / DSM 18059 / JW/NM-WN-LF) protein is tRNA modification GTPase MnmE.